Consider the following 503-residue polypeptide: UDP-N-acetylmuramoylalanine--D-glutamate ligase (503 aa).

ATP is bound at residue glycine 129 to threonine 135.

The protein belongs to the MurCDEF family.

The protein localises to the cytoplasm. The enzyme catalyses UDP-N-acetyl-alpha-D-muramoyl-L-alanine + D-glutamate + ATP = UDP-N-acetyl-alpha-D-muramoyl-L-alanyl-D-glutamate + ADP + phosphate + H(+). It functions in the pathway cell wall biogenesis; peptidoglycan biosynthesis. Its function is as follows. Cell wall formation. Catalyzes the addition of glutamate to the nucleotide precursor UDP-N-acetylmuramoyl-L-alanine (UMA). In Burkholderia cenocepacia (strain HI2424), this protein is UDP-N-acetylmuramoylalanine--D-glutamate ligase.